A 491-amino-acid polypeptide reads, in one-letter code: Probable protein phosphatase 2C 6 (491 aa).

Over residues 1–16 (MGLCHSKIDKTTRKET) the composition is skewed to basic and acidic residues. The tract at residues 1–39 (MGLCHSKIDKTTRKETGATSTATTTVERQSSGRLRRPRD) is disordered. A compositionally biased stretch (low complexity) spans 17-28 (GATSTATTTVER). Positions 64–376 (IACLYTQQGK…DDCAVVCLFL (313 aa)) constitute a PPM-type phosphatase domain. 4 residues coordinate Mn(2+): Asp-100, Gly-101, Asp-321, and Asp-367. A disordered region spans residues 391-422 (VNHSHEESTESVTITSSKDADKKEEASTETNE).

This sequence belongs to the PP2C family. The cofactor is Mg(2+). It depends on Mn(2+) as a cofactor.

It carries out the reaction O-phospho-L-seryl-[protein] + H2O = L-seryl-[protein] + phosphate. The enzyme catalyses O-phospho-L-threonyl-[protein] + H2O = L-threonyl-[protein] + phosphate. The sequence is that of Probable protein phosphatase 2C 6 from Arabidopsis thaliana (Mouse-ear cress).